The chain runs to 282 residues: Protease HtpX homolog (282 aa).

Helical transmembrane passes span 6–26 (TLVLMVFLSVFFIFVGSLIGG) and 29–49 (GATFALIMALGMNFFAYFFSH). Position 130 (H130) interacts with Zn(2+). Residue E131 is part of the active site. H134 contacts Zn(2+). Helical transmembrane passes span 140-160 (ILISTIAATIAGAISYLAQMA) and 180-200 (IVALLMMIIAPLIAMIIQLAI). Residue E205 participates in Zn(2+) binding.

The protein belongs to the peptidase M48B family. Requires Zn(2+) as cofactor.

It is found in the cell inner membrane. This chain is Protease HtpX homolog, found in Thermodesulfovibrio yellowstonii (strain ATCC 51303 / DSM 11347 / YP87).